Reading from the N-terminus, the 258-residue chain is Phosphoribosylaminoimidazole-succinocarboxamide synthase (258 aa).

The protein belongs to the SAICAR synthetase family.

It carries out the reaction 5-amino-1-(5-phospho-D-ribosyl)imidazole-4-carboxylate + L-aspartate + ATP = (2S)-2-[5-amino-1-(5-phospho-beta-D-ribosyl)imidazole-4-carboxamido]succinate + ADP + phosphate + 2 H(+). It participates in purine metabolism; IMP biosynthesis via de novo pathway; 5-amino-1-(5-phospho-D-ribosyl)imidazole-4-carboxamide from 5-amino-1-(5-phospho-D-ribosyl)imidazole-4-carboxylate: step 1/2. In Maricaulis maris (strain MCS10) (Caulobacter maris), this protein is Phosphoribosylaminoimidazole-succinocarboxamide synthase.